Here is a 274-residue protein sequence, read N- to C-terminus: Penicillin-insensitive murein endopeptidase (274 aa).

Positions 1–19 are cleaved as a signal peptide; it reads MNKTAIALLALLASSVSLA. Intrachain disulfides connect cysteine 44–cysteine 265, cysteine 187–cysteine 235, and cysteine 216–cysteine 223. 6 residues coordinate Zn(2+): histidine 110, histidine 113, aspartate 120, aspartate 147, histidine 150, and histidine 211. A disordered region spans residues 227 to 274; that stretch reads PLPPPGDGCGAELQSWFEPPKPGTTKPEKKTPPPLPPSCQALLDEHVI.

It belongs to the peptidase M74 family. Dimer. Zn(2+) serves as cofactor.

Its subcellular location is the periplasm. In terms of biological role, murein endopeptidase that cleaves the D-alanyl-meso-2,6-diamino-pimelyl amide bond that connects peptidoglycan strands. Likely plays a role in the removal of murein from the sacculus. In Shigella dysenteriae serotype 1 (strain Sd197), this protein is Penicillin-insensitive murein endopeptidase.